A 190-amino-acid polypeptide reads, in one-letter code: Elongation factor P (190 aa).

The protein belongs to the elongation factor P family.

The protein resides in the cytoplasm. It participates in protein biosynthesis; polypeptide chain elongation. Its function is as follows. Involved in peptide bond synthesis. Stimulates efficient translation and peptide-bond synthesis on native or reconstituted 70S ribosomes in vitro. Probably functions indirectly by altering the affinity of the ribosome for aminoacyl-tRNA, thus increasing their reactivity as acceptors for peptidyl transferase. The chain is Elongation factor P (efp) from Mycoplasma pneumoniae (strain ATCC 29342 / M129 / Subtype 1) (Mycoplasmoides pneumoniae).